Here is a 481-residue protein sequence, read N- to C-terminus: Aspartyl/glutamyl-tRNA(Asn/Gln) amidotransferase subunit B (481 aa).

The protein belongs to the GatB/GatE family. GatB subfamily. Heterotrimer of A, B and C subunits.

It catalyses the reaction L-glutamyl-tRNA(Gln) + L-glutamine + ATP + H2O = L-glutaminyl-tRNA(Gln) + L-glutamate + ADP + phosphate + H(+). It carries out the reaction L-aspartyl-tRNA(Asn) + L-glutamine + ATP + H2O = L-asparaginyl-tRNA(Asn) + L-glutamate + ADP + phosphate + 2 H(+). Its function is as follows. Allows the formation of correctly charged Asn-tRNA(Asn) or Gln-tRNA(Gln) through the transamidation of misacylated Asp-tRNA(Asn) or Glu-tRNA(Gln) in organisms which lack either or both of asparaginyl-tRNA or glutaminyl-tRNA synthetases. The reaction takes place in the presence of glutamine and ATP through an activated phospho-Asp-tRNA(Asn) or phospho-Glu-tRNA(Gln). This is Aspartyl/glutamyl-tRNA(Asn/Gln) amidotransferase subunit B from Pseudomonas putida (strain ATCC 700007 / DSM 6899 / JCM 31910 / BCRC 17059 / LMG 24140 / F1).